A 367-amino-acid polypeptide reads, in one-letter code: snRNA-activating protein complex subunit 1 (367 aa).

The interval 1–168 is SNAPC3-binding; it reads MGTPPGLQTD…EEFKDPSDRV (168 aa). The segment at 164–268 is SNAPC4-binding; it reads PSDRVMKLIT…AESLAKIKSK (105 aa). Disordered stretches follow at residues 228–254 and 278–367; these read KDRK…QETE and KSRR…KRKH. The segment covering 238-254 has biased composition (basic and acidic residues); that stretch reads KINDGEEKMEGNSQETE. Phosphoserine occurs at positions 289 and 290. Residues 292-301 show a composition bias toward polar residues; the sequence is CDSASGQGQV.

Part of the SNAPc complex composed of 5 subunits: SNAPC1, SNAPC2, SNAPC3, SNAPC4 and SNAPC5. SNAPC1 interacts with SNAPC3, SNAPC4 and TBP.

The protein resides in the nucleus. In terms of biological role, part of the SNAPc complex required for the transcription of both RNA polymerase II and III small-nuclear RNA genes. Binds to the proximal sequence element (PSE), a non-TATA-box basal promoter element common to these 2 types of genes. Recruits TBP and BRF2 to the U6 snRNA TATA box. This is snRNA-activating protein complex subunit 1 (SNAPC1) from Macaca fascicularis (Crab-eating macaque).